Reading from the N-terminus, the 149-residue chain is D-aminoacyl-tRNA deacylase (149 aa).

The Gly-cisPro motif, important for rejection of L-amino acids signature appears at 137 to 138 (GP).

Belongs to the DTD family. As to quaternary structure, homodimer.

The protein resides in the cytoplasm. The enzyme catalyses glycyl-tRNA(Ala) + H2O = tRNA(Ala) + glycine + H(+). The catalysed reaction is a D-aminoacyl-tRNA + H2O = a tRNA + a D-alpha-amino acid + H(+). Functionally, an aminoacyl-tRNA editing enzyme that deacylates mischarged D-aminoacyl-tRNAs. Also deacylates mischarged glycyl-tRNA(Ala), protecting cells against glycine mischarging by AlaRS. Acts via tRNA-based rather than protein-based catalysis; rejects L-amino acids rather than detecting D-amino acids in the active site. By recycling D-aminoacyl-tRNA to D-amino acids and free tRNA molecules, this enzyme counteracts the toxicity associated with the formation of D-aminoacyl-tRNA entities in vivo and helps enforce protein L-homochirality. The polypeptide is D-aminoacyl-tRNA deacylase (Clostridium botulinum (strain Alaska E43 / Type E3)).